The chain runs to 150 residues: UPF0756 membrane protein HAPS_1649 (150 aa).

5 helical membrane-spanning segments follow: residues 1-21 (MSLQ…LGIF), 27-46 (VTIS…SKYV), 52-72 (YGIK…LVSG), 82-102 (LINW…WLGG), and 123-143 (IIGV…AGIL).

Belongs to the UPF0756 family.

It localises to the cell membrane. The sequence is that of UPF0756 membrane protein HAPS_1649 from Glaesserella parasuis serovar 5 (strain SH0165) (Haemophilus parasuis).